The primary structure comprises 442 residues: Meiosis-specific with OB domain-containing protein (442 aa).

The segment at residues 167-272 is a DNA-binding region (OB); it reads IINVLAAVKS…EANILLNFIR (106 aa).

The protein belongs to the MEIOB family. As to quaternary structure, component of a multiprotein complex with RPA2 and SPATA22. Interacts with SPATA22. Interacts with the complex BRME1:HSF2BP:BRCA2. As to expression, in fetal gonads, specifically expressed in the ovary starting at the 14th weeks post fertilization. In the adult, restricted to testis.

The protein resides in the cytoplasm. It is found in the nucleus. The protein localises to the chromosome. Functionally, single-stranded DNA-binding protein required for homologous recombination in meiosis I. Required for double strand breaks (DSBs) repair and crossover formation and promotion of faithful and complete synapsis. Not required for the initial loading of recombinases but required to maintain a proper number of RAD51 and DMC1 foci after the zygotene stage. May act by ensuring the stabilization of recombinases, which is required for successful homology search and meiotic recombination. Displays Single-stranded DNA 3'-5' exonuclease activity in vitro. In Homo sapiens (Human), this protein is Meiosis-specific with OB domain-containing protein.